Consider the following 256-residue polypeptide: Probable aquaporin TIP-type alpha (256 aa).

Over 1-24 (MATRRYSFGRTDEATHPDSMRASL) the chain is Cytoplasmic. Ser7 bears the Phosphoserine; by CPK mark. A helical transmembrane segment spans residues 25–44 (AEFASTFIFVFAGEGSGLAL). At 45–57 (VKIYQDSAFSAGE) the chain is on the vacuolar side. The helical transmembrane segment at 58-77 (LLALALAHAFALFAAVSASM) threads the bilayer. Residues 78–102 (HVSGGHVNPAVSFGALIGGRISVIR) are Cytoplasmic-facing. Residues 85 to 87 (NPA) carry the NPA 1 motif. Residues 103–121 (AVYYWIAQLLGSIVAALVL) form a helical membrane-spanning segment. The Vacuolar segment spans residues 122–143 (RLVTNNMRPSGFHVSPGVGVGH). Residues 144–164 (MFILEVVMTFGLMYTVYGTAI) form a helical membrane-spanning segment. Over 165 to 169 (DPKRG) the chain is Cytoplasmic. The helical transmembrane segment at 170 to 189 (AVSYIAPLAIGLIVGANILV) threads the bilayer. Over 190–216 (GGPFDGACMNPALAFGPSLVGWQWHQH) the chain is Vacuolar. Positions 199–201 (NPA) match the NPA 2 motif. Residues 217 to 239 (WIFWVGPLLGAALAALVYEYAVI) form a helical membrane-spanning segment. At 240–256 (PIEPPPHHHQPLATEDY) the chain is on the cytoplasmic side.

It belongs to the MIP/aquaporin (TC 1.A.8) family. TIP (TC 1.A.8.10) subfamily. Post-translationally, phosphorylated by a tonoplast-bound calcium-dependent protein kinase. Found in all seed tissues that are alive at seed maturity, but not in tissues that lose viability during seed maturation.

It is found in the vacuole membrane. In terms of biological role, channel protein in tonoplast. These proteins may allow the diffusion of amino acids and/or peptides from the vacuolar compartment to the cytoplasm. This is Probable aquaporin TIP-type alpha from Phaseolus vulgaris (Kidney bean).